The chain runs to 353 residues: Uroporphyrinogen decarboxylase (353 aa).

Residues 29-33 (RQAGR), Asp-78, Tyr-154, Ser-209, and His-322 contribute to the substrate site.

Belongs to the uroporphyrinogen decarboxylase family. In terms of assembly, homodimer.

The protein localises to the cytoplasm. The enzyme catalyses uroporphyrinogen III + 4 H(+) = coproporphyrinogen III + 4 CO2. It participates in porphyrin-containing compound metabolism; protoporphyrin-IX biosynthesis; coproporphyrinogen-III from 5-aminolevulinate: step 4/4. Functionally, catalyzes the decarboxylation of four acetate groups of uroporphyrinogen-III to yield coproporphyrinogen-III. The polypeptide is Uroporphyrinogen decarboxylase (Bacillus velezensis (strain DSM 23117 / BGSC 10A6 / LMG 26770 / FZB42) (Bacillus amyloliquefaciens subsp. plantarum)).